Consider the following 399-residue polypeptide: LEM domain-containing protein Bocksbeutel (399 aa).

In terms of domain architecture, LEM spans 4-48; that stretch reads LSYLDTLGNKELLAKCLEHGLPGVPVTDSTRSVIIRRLKAKITGV. Disordered regions lie at residues 49–103, 119–141, and 233–287; these read PLNK…EQSR, SVQTTTTVSDMSSQSEDDDSYMV, and NSTS…SNLA. 2 stretches are compositionally biased toward polar residues: residues 68–77 and 89–99; these read HGSQVTTPTS and GRTSSNNNKIS. Residues 233–256 are compositionally biased toward polar residues; the sequence is NSTSYEESSTYNPKLSPISPRNTF. A helical transmembrane segment spans residues 377–397; sequence FYLILVVSVMLATMVYVVLTP.

The protein localises to the nucleus inner membrane. It localises to the cytoplasm. The protein resides in the nucleus. It is found in the nucleoplasm. Its subcellular location is the endoplasmic reticulum. Its function is as follows. Inner nuclear membrane protein. May have a role in maintaining the structural integrity of the nuclear lamina. During pupal development, plays essential and redundant functions with the other LEM domain proteins; MAN1 and Ote. Also has a redundant but important role with Ote in larval development. The chain is LEM domain-containing protein Bocksbeutel from Drosophila melanogaster (Fruit fly).